The chain runs to 555 residues: MAQFVYTMHRVGKVVPPKRHILKNISLSFFPGAKIGVLGLNGAGKSTLLRIMAGIDKDIEGEARPQPDIKIGYLPQEPQLNPEHTVRESIEEAVSEVVNALKRLDEVYALYADPDADFDKLAAEQGRLEEIIQAHDGHNLNVQLERAADALRLPDWDAKIANLSGGERRRVALCRLLLEKPDMLLLDEPTNHLDAESVAWLERFLHDFEGTVVAITHDRYFLDNVAGWILELDRGEGIPWEGNYSSWLEQKDQRLAQEASQEAARRKSIEKELEWVRQGTKGRQSKGKARLARFEELNSTEYQKRNETNELFIPPGPRLGDKVLEVSNLRKSYGDRLLIDSLSFSIPKGAIVGIIGPNGAGKSTLFRMISGQEQPDSGTITLGETVKLASVDQFRDSMDNSKTVWEEVSGGLDIMKIGNTEMPSRAYVGRFNFKGVDQGKRVGELSGGERGRLHLAKLLQVGGNMLLLDEPTNDLDIETLRALENALLEFPGCAMVISHDRWFLDRIATHILDYQDEGKVEFFEGNFTEYEEYKKRTLGADALEPKRIKYKRIAK.

ABC transporter domains lie at 6-259 (YTMH…AQEA) and 324-550 (LEVS…RIKY). 39–46 (GLNGAGKS) contributes to the ATP binding site. The interval 95-139 (SEVVNALKRLDEVYALYADPDADFDKLAAEQGRLEEIIQAHDGHN) is arm. The interval 242–322 (GNYSSWLEQK…IPPGPRLGDK (81 aa)) is ptIM. 356–363 (GPNGAGKS) is an ATP binding site.

This sequence belongs to the ABC transporter superfamily. ABCF family. Translational throttle EttA subfamily. Monomer. Probably contacts ribosomal proteins L1, L5, L33 and S7, the 16S and 23S rRNA and the P-site containing tRNA(fMet).

It localises to the cytoplasm. It carries out the reaction ATP + H2O = ADP + phosphate + H(+). A translation factor that gates the progression of the 70S ribosomal initiation complex (IC, containing tRNA(fMet) in the P-site) into the translation elongation cycle by using a mechanism sensitive to the ATP/ADP ratio. Binds to the 70S ribosome E-site where it modulates the state of the translating ribosome during subunit translocation. ATP hydrolysis probably frees it from the ribosome, which can enter the elongation phase. This chain is Energy-dependent translational throttle protein EttA, found in Escherichia coli O6:H1 (strain CFT073 / ATCC 700928 / UPEC).